A 485-amino-acid chain; its full sequence is Glutamyl-tRNA(Gln) amidotransferase subunit A (485 aa).

Catalysis depends on charge relay system residues lysine 78 and serine 153. The active-site Acyl-ester intermediate is the serine 177.

This sequence belongs to the amidase family. GatA subfamily. Heterotrimer of A, B and C subunits.

The enzyme catalyses L-glutamyl-tRNA(Gln) + L-glutamine + ATP + H2O = L-glutaminyl-tRNA(Gln) + L-glutamate + ADP + phosphate + H(+). Functionally, allows the formation of correctly charged Gln-tRNA(Gln) through the transamidation of misacylated Glu-tRNA(Gln) in organisms which lack glutaminyl-tRNA synthetase. The reaction takes place in the presence of glutamine and ATP through an activated gamma-phospho-Glu-tRNA(Gln). This chain is Glutamyl-tRNA(Gln) amidotransferase subunit A, found in Bacillus cereus (strain G9842).